The chain runs to 121 residues: Large ribosomal subunit protein bL19 (121 aa).

This sequence belongs to the bacterial ribosomal protein bL19 family.

Functionally, this protein is located at the 30S-50S ribosomal subunit interface and may play a role in the structure and function of the aminoacyl-tRNA binding site. This Borrelia garinii subsp. bavariensis (strain ATCC BAA-2496 / DSM 23469 / PBi) (Borreliella bavariensis) protein is Large ribosomal subunit protein bL19.